Consider the following 90-residue polypeptide: Protein RL8A (90 aa).

A helical membrane pass occupies residues 15–34 (WTCEGLLLLLGLLVLFFHHH). The tract at residues 55–90 (HESGWYSSDDDGDRDGDEETGESHNRNSVGLSAVFS) is disordered. Over residues 62-74 (SDDDGDRDGDEET) the composition is skewed to acidic residues. The segment covering 80 to 90 (RNSVGLSAVFS) has biased composition (polar residues).

Its subcellular location is the host membrane. This chain is Protein RL8A (RL8A), found in Homo sapiens (Human).